A 138-amino-acid chain; its full sequence is Putative pre-16S rRNA nuclease (138 aa).

Belongs to the YqgF nuclease family.

The protein resides in the cytoplasm. Functionally, could be a nuclease involved in processing of the 5'-end of pre-16S rRNA. The chain is Putative pre-16S rRNA nuclease from Bacillus pumilus (strain SAFR-032).